The primary structure comprises 184 residues: Dynactin subunit 6 (184 aa).

The protein belongs to the dynactin subunits 5/6 family. Dynactin subunit 6 subfamily. Subunit of dynactin, a multiprotein complex part of a tripartite complex with dynein and a adapter, such as BICDL1, BICD2 or HOOK3. The dynactin complex is built around ACTR1A/ACTB filament and consists of an actin-related filament composed of a shoulder domain, a pointed end and a barbed end.

The protein localises to the cytoplasm. It is found in the cytoskeleton. Its function is as follows. Part of the dynactin complex that activates the molecular motor dynein for ultra-processive transport along microtubules. The protein is Dynactin subunit 6 (dctn6) of Nematostella vectensis (Starlet sea anemone).